The sequence spans 284 residues: Bifunctional protein FolD (284 aa).

Residues 166 to 168 (GAS) and Ile-232 each bind NADP(+).

Belongs to the tetrahydrofolate dehydrogenase/cyclohydrolase family. Homodimer.

It carries out the reaction (6R)-5,10-methylene-5,6,7,8-tetrahydrofolate + NADP(+) = (6R)-5,10-methenyltetrahydrofolate + NADPH. The enzyme catalyses (6R)-5,10-methenyltetrahydrofolate + H2O = (6R)-10-formyltetrahydrofolate + H(+). The protein operates within one-carbon metabolism; tetrahydrofolate interconversion. Its function is as follows. Catalyzes the oxidation of 5,10-methylenetetrahydrofolate to 5,10-methenyltetrahydrofolate and then the hydrolysis of 5,10-methenyltetrahydrofolate to 10-formyltetrahydrofolate. The polypeptide is Bifunctional protein FolD (Alteromonas mediterranea (strain DSM 17117 / CIP 110805 / LMG 28347 / Deep ecotype)).